The following is a 361-amino-acid chain: Outer membrane protein P2 (361 aa).

The N-terminal stretch at 1-20 is a signal peptide; sequence MKKTLAALIVGAFAASAANA.

It belongs to the Gram-negative porin family. Homotrimer.

It is found in the cell outer membrane. Functionally, forms pores that allow passive diffusion of small molecules across the outer membrane. The sequence is that of Outer membrane protein P2 (ompP2) from Haemophilus influenzae.